The primary structure comprises 572 residues: Secreted triacylglycerol lipase LIP6 (572 aa).

The first 23 residues, 1 to 23 (MYSTSLLRWLVVALVSAVPLVTA), serve as a signal peptide directing secretion. Cys-117 and Cys-291 are disulfide-bonded. Catalysis depends on Ser-202, which acts as the Nucleophile. The active site involves Asp-351. Asn-360 carries an N-linked (GlcNAc...) asparagine glycan. His-385 is a catalytic residue. The interval 468 to 572 (KGGVWNDVLK…SSRRHVARFM (105 aa)) is disordered. Positions 491–511 (PESKKATKKYKSESKAEKKQP) are enriched in basic and acidic residues. Over residues 512–525 (DSIPSSSSKSSSDN) the composition is skewed to low complexity. Residue Asn-525 is glycosylated (N-linked (GlcNAc...) asparagine). Over residues 528-540 (AHAKYHAHGHGHG) the composition is skewed to basic residues. Residues 541–562 (HASSNSNNGHSHSAKESSTSKG) show a composition bias toward low complexity. Residues 563 to 572 (SSRRHVARFM) show a composition bias toward basic residues.

This sequence belongs to the AB hydrolase superfamily. Lipase family. Class Lip subfamily.

It localises to the secreted. The protein resides in the cell wall. The catalysed reaction is a triacylglycerol + H2O = a diacylglycerol + a fatty acid + H(+). It catalyses the reaction a monoacylglycerol + H2O = glycerol + a fatty acid + H(+). It carries out the reaction a diacylglycerol + H2O = a monoacylglycerol + a fatty acid + H(+). Its function is as follows. Secreted lipase involved in Dandruff and seborrheic dermatitis (D/SD) probably via lipase-mediated breakdown of sebaceous lipids and release of irritating free fatty acids. Shows only minimal activity against triolein. Mostly converts monoolein to di- and triolein, while free fatty acids are only produced in low amounts. The sequence is that of Secreted triacylglycerol lipase LIP6 from Malassezia globosa (strain ATCC MYA-4612 / CBS 7966) (Dandruff-associated fungus).